The following is a 191-amino-acid chain: Outer membrane lipoprotein DolP (191 aa).

The signal sequence occupies residues 1-18 (MKALSPIAVLISALLLQG). Cysteine 19 carries N-palmitoyl cysteine lipidation. A lipid anchor (S-diacylglycerol cysteine) is attached at cysteine 19. BON domains follow at residues 46–115 (DDGT…RQGQ) and 124–191 (NDTW…TFIK).

It belongs to the lipoprotein DolP family.

The protein localises to the cell outer membrane. In terms of biological role, plays an important role in maintaining outer membrane integrity. This is Outer membrane lipoprotein DolP from Escherichia coli O157:H7.